The chain runs to 258 residues: Ureidoacrylate amidohydrolase RutB (258 aa).

Residues 1-23 (MDRPTTYPMDQPAGFRDAQGRHG) form a disordered region. The active-site Proton acceptor is aspartate 47. Lysine 156 is a catalytic residue. Catalysis depends on cysteine 189, which acts as the Nucleophile.

The protein belongs to the isochorismatase family. RutB subfamily.

It carries out the reaction (Z)-3-ureidoacrylate + H2O + H(+) = (Z)-3-aminoacrylate + NH4(+) + CO2. The catalysed reaction is (Z)-3-ureidoacrylate + H2O = (Z)-3-aminoacrylate + carbamate + H(+). The enzyme catalyses (Z)-2-methylureidoacrylate + H2O + H(+) = (Z)-2-methylaminoacrylate + NH4(+) + CO2. In terms of biological role, hydrolyzes ureidoacrylate to form aminoacrylate and carbamate. The carbamate hydrolyzes spontaneously, thereby releasing one of the nitrogen atoms of the pyrimidine ring as ammonia and one of its carbon atoms as CO2. The polypeptide is Ureidoacrylate amidohydrolase RutB (Methylobacterium radiotolerans (strain ATCC 27329 / DSM 1819 / JCM 2831 / NBRC 15690 / NCIMB 10815 / 0-1)).